A 581-amino-acid chain; its full sequence is Probable hexosyltransferase MUCI70 (581 aa).

Residues 1 to 58 lie on the Cytoplasmic side of the membrane; the sequence is MTGLGVRSSSYGSLEKTGLNGVVLPIQITTTTRTKPSKMQKDREGIVHWICKFAGRKK. A helical; Signal-anchor for type II membrane protein transmembrane segment spans residues 59–79; that stretch reads VGMLLLFLISAVVFLRVLYVG. Residues 80 to 581 are Lumenal-facing; sequence KGEDSQEGQG…NLPVRLPDSA (502 aa). N-linked (GlcNAc...) asparagine glycosylation is found at asparagine 96, asparagine 102, asparagine 119, asparagine 194, asparagine 224, asparagine 285, asparagine 382, asparagine 411, and asparagine 488. Residues 514 to 581 form a disordered region; it reads RFARQRPPVP…NLPVRLPDSA (68 aa). Residues 520 to 536 are compositionally biased toward pro residues; that stretch reads PPVPNFPPPPPSPPPPV. Residues 553–571 show a composition bias toward basic residues; sequence PPRRRGRDRRSGQRGHRKA.

The protein belongs to the glycosyltransferase 8 family. As to expression, expressed in siliques and seeds.

It localises to the golgi apparatus membrane. The protein operates within glycan metabolism; pectin biosynthesis. Its function is as follows. Probable glycosyltransferase involved in pectin and/or xylans biosynthesis in cell walls. Together with IRX14, required for xylan and pectin synthesis in seed coat epidermal (SCE) cells. Collaboratively with GAUT11, essential for the accumulation of seed mucilage, a gelatinous wall rich in unbranched rhamnogalacturonan I (RG I), and for shaping the surface morphology of seeds. The polypeptide is Probable hexosyltransferase MUCI70 (Arabidopsis thaliana (Mouse-ear cress)).